Consider the following 251-residue polypeptide: GTP cyclohydrolase 1 type 2 homolog (251 aa).

The a divalent metal cation site is built by His-64, His-65, Asp-102, His-219, and Glu-223.

This sequence belongs to the GTP cyclohydrolase I type 2/NIF3 family. As to quaternary structure, homohexamer.

In Chlamydia muridarum (strain MoPn / Nigg), this protein is GTP cyclohydrolase 1 type 2 homolog.